The chain runs to 700 residues: Mei4-dependent protein 6 (700 aa).

Kelch repeat units lie at residues 276-322, 327-381, 390-439, 452-499, 508-558, and 569-619; these read CIYL…MVID, KLYL…FDHG, IVYV…KIER, KLYI…FCQR, RIFT…SRFG, and IIYL…RFHE.

The protein is Mei4-dependent protein 6 (mde6) of Schizosaccharomyces pombe (strain 972 / ATCC 24843) (Fission yeast).